A 73-amino-acid chain; its full sequence is UPF0435 protein lmo1707 (73 aa).

It belongs to the UPF0435 family.

In Listeria monocytogenes serovar 1/2a (strain ATCC BAA-679 / EGD-e), this protein is UPF0435 protein lmo1707.